We begin with the raw amino-acid sequence, 230 residues long: MKKAVVLLSGGMDSAVVTAIAQSQGFMVHALSIRYGQRHTSELDAAVRIARVLNVAAHKVVDVDLRSIGGSALTDDIEIPDAGGKGIPVTYVPARNTIMLSLALGWAEVIGAADIFCGVNAVDYSGYPDCRPQFITAFETLANLATKVGVEGTQLHVHAPLQFLSKAEIVHEGVLHGVDFGLTVSCYRADVDGRACGRCDACKLRAAGFADAGVADPTRYMELPCSLLLL.

8–18 contacts ATP; sequence LSGGMDSAVVT. Positions 186, 196, 199, and 202 each coordinate Zn(2+).

It belongs to the QueC family. Requires Zn(2+) as cofactor.

It carries out the reaction 7-carboxy-7-deazaguanine + NH4(+) + ATP = 7-cyano-7-deazaguanine + ADP + phosphate + H2O + H(+). It functions in the pathway purine metabolism; 7-cyano-7-deazaguanine biosynthesis. Its function is as follows. Catalyzes the ATP-dependent conversion of 7-carboxy-7-deazaguanine (CDG) to 7-cyano-7-deazaguanine (preQ(0)). The sequence is that of 7-cyano-7-deazaguanine synthase from Xylella fastidiosa (strain 9a5c).